The chain runs to 211 residues: Large ribosomal subunit protein uL4 (211 aa).

A disordered region spans residues 40-85; that stretch reads QQAHSRQGTASTLTRSEVRGGGRKPYKQKGTGRARQGSVRTPLRPG. A compositionally biased stretch (polar residues) spans 41–54; the sequence is QAHSRQGTASTLTR. Basic residues predominate over residues 60–71; sequence GGRKPYKQKGTG.

The protein belongs to the universal ribosomal protein uL4 family. Part of the 50S ribosomal subunit.

In terms of biological role, one of the primary rRNA binding proteins, this protein initially binds near the 5'-end of the 23S rRNA. It is important during the early stages of 50S assembly. It makes multiple contacts with different domains of the 23S rRNA in the assembled 50S subunit and ribosome. Functionally, forms part of the polypeptide exit tunnel. This Synechococcus sp. (strain CC9311) protein is Large ribosomal subunit protein uL4.